The sequence spans 1341 residues: Pleckstrin homology domain-containing family G member 3 (1341 aa).

Residues 1–68 (MPVSTALHQD…PNSNNNSSGW (68 aa)) are disordered. Low complexity predominate over residues 18–29 (SLVSTTSSSGSS). 2 stretches are compositionally biased toward polar residues: residues 42–51 (SEASAQNGTG) and 59–68 (PNSNNNSSGW). Ser76 is modified (phosphoserine). Positions 93 to 272 (YLGRVVREIV…TCVAWYINDM (180 aa)) constitute a DH domain. The PH domain occupies 296–394 (DLTTYGELVL…WTHHIKRLIL (99 aa)). Ser433 and Ser502 each carry phosphoserine. The tract at residues 433–482 (SQDEVSSHVRQGRRQSEPGHTLFSRATLPSRQQGFEMPGLKGRRKSEPTR) is disordered. 2 disordered regions span residues 508-657 (DFGQ…EFPE) and 684-715 (PEGS…LLPP). 2 stretches are compositionally biased toward acidic residues: residues 529–541 (ELEE…EEEE) and 570–580 (GSEEEEEEEES). Phosphoserine occurs at positions 571, 694, 695, 737, 759, 762, and 766. Residues 695–707 (SEEEEEEEMEAAQ) show a composition bias toward acidic residues. The segment at 775-832 (SIGDSLSNPPTPEVIIGADMVTDNGPSVNGTESPSAGSGCPTEQDRSSCKKKESALST) is disordered. Residues 798-810 (NGPSVNGTESPSA) show a composition bias toward polar residues. Over residues 817-832 (EQDRSSCKKKESALST) the composition is skewed to basic and acidic residues. Phosphoserine is present on residues Ser862, Ser899, Ser900, and Ser947. Disordered stretches follow at residues 876-930 (SRFN…EFCP), 939-958 (ERME…SQAN), 1071-1097 (KVTP…SGGK), and 1117-1162 (HGTS…PFDT). Positions 939–948 (ERMESSERSP) are enriched in basic and acidic residues. Over residues 949–958 (RTGSGQSQAN) the composition is skewed to polar residues. Ser1129, Ser1134, Ser1136, Ser1141, Ser1155, Ser1158, and Ser1201 each carry phosphoserine. The span at 1135–1162 (FSPSAVSPRTTSPGARSSARSPLSPFDT) shows a compositional bias: polar residues. 2 disordered regions span residues 1204 to 1249 (ENIV…LNGG) and 1271 to 1341 (KGPH…NSVG). The segment covering 1309-1320 (QPKEHGPRDSAD) has biased composition (basic and acidic residues).

It is found in the cytoplasm. The protein localises to the cytoskeleton. Plays a role in controlling cell polarity and cell motility by selectively binding newly polymerized actin and activating RAC1 and CDC42 to enhance local actin polymerization. The protein is Pleckstrin homology domain-containing family G member 3 of Mus musculus (Mouse).